Reading from the N-terminus, the 156-residue chain is Transcriptional repressor NrdR (156 aa).

The segment at 3–34 (CPYCGHLEDRVVDSRETQDGQATRRRRACLSC) is a zinc-finger region. The ATP-cone domain occupies 49-139 (PQVVKKDGRR…VYRAFRDVGE (91 aa)).

The protein belongs to the NrdR family. The cofactor is Zn(2+).

Functionally, negatively regulates transcription of bacterial ribonucleotide reductase nrd genes and operons by binding to NrdR-boxes. The sequence is that of Transcriptional repressor NrdR from Anaeromyxobacter dehalogenans (strain 2CP-C).